The following is a 516-amino-acid chain: Apolipoprotein N-acyltransferase (516 aa).

The next 6 helical transmembrane spans lie at 24-44, 58-78, 90-110, 125-145, 163-183, and 192-212; these read LAQA…LLYL, GWCY…ISIH, LLTL…AWLW, LAFA…LTGF, APLG…ALLV, and PPAL…GLAL. The CN hydrolase domain maps to 230 to 471; that stretch reads VQGNVEQNLK…RAVLYGEVTP (242 aa). The active-site Proton acceptor is glutamate 270. Residue lysine 331 is part of the active site. Residue cysteine 383 is the Nucleophile of the active site. A helical transmembrane segment spans residues 479-499; the sequence is LRWRAWPLAGLAVLLLGWALL.

It belongs to the CN hydrolase family. Apolipoprotein N-acyltransferase subfamily.

Its subcellular location is the cell inner membrane. The enzyme catalyses N-terminal S-1,2-diacyl-sn-glyceryl-L-cysteinyl-[lipoprotein] + a glycerophospholipid = N-acyl-S-1,2-diacyl-sn-glyceryl-L-cysteinyl-[lipoprotein] + a 2-acyl-sn-glycero-3-phospholipid + H(+). It functions in the pathway protein modification; lipoprotein biosynthesis (N-acyl transfer). Functionally, catalyzes the phospholipid dependent N-acylation of the N-terminal cysteine of apolipoprotein, the last step in lipoprotein maturation. The sequence is that of Apolipoprotein N-acyltransferase from Azotobacter vinelandii (strain DJ / ATCC BAA-1303).